Reading from the N-terminus, the 184-residue chain is dCTP deaminase (184 aa).

Position 107-112 (107-112 (KSTYAR)) interacts with dCTP. The active-site Proton donor/acceptor is E133. DCTP is bound by residues Q152, Y166, and Q176.

It belongs to the dCTP deaminase family. Homotrimer.

The catalysed reaction is dCTP + H2O + H(+) = dUTP + NH4(+). Its pathway is pyrimidine metabolism; dUMP biosynthesis; dUMP from dCTP (dUTP route): step 1/2. Catalyzes the deamination of dCTP to dUTP. The sequence is that of dCTP deaminase from Granulibacter bethesdensis (strain ATCC BAA-1260 / CGDNIH1).